A 170-amino-acid chain; its full sequence is Shikimate kinase (170 aa).

An ATP-binding site is contributed by 11–16; it reads LSGKST. A Mg(2+)-binding site is contributed by serine 15. Residues aspartate 33, arginine 57, and glycine 79 each coordinate substrate. Arginine 119 contacts ATP. Position 137 (arginine 137) interacts with substrate.

The protein belongs to the shikimate kinase family. As to quaternary structure, monomer. Requires Mg(2+) as cofactor.

Its subcellular location is the cytoplasm. The enzyme catalyses shikimate + ATP = 3-phosphoshikimate + ADP + H(+). It participates in metabolic intermediate biosynthesis; chorismate biosynthesis; chorismate from D-erythrose 4-phosphate and phosphoenolpyruvate: step 5/7. Catalyzes the specific phosphorylation of the 3-hydroxyl group of shikimic acid using ATP as a cosubstrate. This chain is Shikimate kinase, found in Clostridium botulinum (strain Kyoto / Type A2).